The chain runs to 105 residues: Vacuolar ATPase assembly integral membrane protein VMA21 homolog (105 aa).

The disordered stretch occupies residues M1–S26. Residues M1–L36 are Cytoplasmic-facing. A helical transmembrane segment spans residues F37–V57. Residues L58–K68 are Lumenal-facing. The chain crosses the membrane as a helical span at residues V69–I89. At Y90 to D105 the chain is on the cytoplasmic side.

This sequence belongs to the VMA21 family.

The protein resides in the endoplasmic reticulum membrane. It is found in the endoplasmic reticulum-Golgi intermediate compartment membrane. It localises to the cytoplasmic vesicle. The protein localises to the COPII-coated vesicle membrane. In terms of biological role, required for the assembly of the V0 complex of the vacuolar ATPase (V-ATPase) in the endoplasmic reticulum. The polypeptide is Vacuolar ATPase assembly integral membrane protein VMA21 homolog (Drosophila yakuba (Fruit fly)).